Reading from the N-terminus, the 298-residue chain is Inosose dehydratase (298 aa).

Belongs to the IolE/MocC family. Glutathione serves as cofactor. Requires Co(2+) as cofactor. The cofactor is Mn(2+).

The catalysed reaction is scyllo-inosose = 3D-3,5/4-trihydroxycyclohexane-1,2-dione + H2O. Its pathway is polyol metabolism; myo-inositol degradation into acetyl-CoA; acetyl-CoA from myo-inositol: step 2/7. In terms of biological role, catalyzes the dehydration of inosose (2-keto-myo-inositol, 2KMI or 2,4,6/3,5-pentahydroxycyclohexanone) to 3D-(3,5/4)-trihydroxycyclohexane-1,2-dione (D-2,3-diketo-4-deoxy-epi-inositol). This Bacillus anthracis (strain CDC 684 / NRRL 3495) protein is Inosose dehydratase.